The sequence spans 795 residues: Lon protease (795 aa).

One can recognise a Lon N-terminal domain in the interval 7 to 213 (SQILVVRGQV…KIIQAGIEDL (207 aa)). Residue 379–386 (GPPGVGKS) coordinates ATP. The Lon proteolytic domain maps to 615–795 (VSLPGIVNGM…YSDIYNKLFS (181 aa)). Residues Ser702 and Lys745 contribute to the active site.

This sequence belongs to the peptidase S16 family. In terms of assembly, homohexamer. Organized in a ring with a central cavity.

It is found in the cytoplasm. The catalysed reaction is Hydrolysis of proteins in presence of ATP.. Functionally, ATP-dependent serine protease that mediates the selective degradation of mutant and abnormal proteins as well as certain short-lived regulatory proteins. Required for cellular homeostasis and for survival from DNA damage and developmental changes induced by stress. Degrades polypeptides processively to yield small peptide fragments that are 5 to 10 amino acids long. Binds to DNA in a double-stranded, site-specific manner. This is Lon protease from Mycoplasma genitalium (strain ATCC 33530 / DSM 19775 / NCTC 10195 / G37) (Mycoplasmoides genitalium).